Here is a 214-residue protein sequence, read N- to C-terminus: Pyridoxine/pyridoxamine 5'-phosphate oxidase (214 aa).

Substrate contacts are provided by residues 8-11 (RINY) and Lys-66. Residues 61–66 (RILLIK), 76–77 (FT), Arg-82, Lys-83, and Gln-105 each bind FMN. 3 residues coordinate substrate: Tyr-123, Arg-127, and Ser-131. Residues 140 to 141 (QS) and Trp-184 contribute to the FMN site. 190–192 (RLH) serves as a coordination point for substrate. Arg-194 is a binding site for FMN.

This sequence belongs to the pyridoxamine 5'-phosphate oxidase family. As to quaternary structure, homodimer. FMN serves as cofactor.

It catalyses the reaction pyridoxamine 5'-phosphate + O2 + H2O = pyridoxal 5'-phosphate + H2O2 + NH4(+). It carries out the reaction pyridoxine 5'-phosphate + O2 = pyridoxal 5'-phosphate + H2O2. It functions in the pathway cofactor metabolism; pyridoxal 5'-phosphate salvage; pyridoxal 5'-phosphate from pyridoxamine 5'-phosphate: step 1/1. Its pathway is cofactor metabolism; pyridoxal 5'-phosphate salvage; pyridoxal 5'-phosphate from pyridoxine 5'-phosphate: step 1/1. Its function is as follows. Catalyzes the oxidation of either pyridoxine 5'-phosphate (PNP) or pyridoxamine 5'-phosphate (PMP) into pyridoxal 5'-phosphate (PLP). The chain is Pyridoxine/pyridoxamine 5'-phosphate oxidase from Burkholderia vietnamiensis (strain G4 / LMG 22486) (Burkholderia cepacia (strain R1808)).